Here is a 292-residue protein sequence, read N- to C-terminus: Ribosomal protein L11 methyltransferase (292 aa).

Positions 143, 164, 186, and 227 each coordinate S-adenosyl-L-methionine.

Belongs to the methyltransferase superfamily. PrmA family.

The protein resides in the cytoplasm. It catalyses the reaction L-lysyl-[protein] + 3 S-adenosyl-L-methionine = N(6),N(6),N(6)-trimethyl-L-lysyl-[protein] + 3 S-adenosyl-L-homocysteine + 3 H(+). Functionally, methylates ribosomal protein L11. The polypeptide is Ribosomal protein L11 methyltransferase (Hahella chejuensis (strain KCTC 2396)).